Reading from the N-terminus, the 616-residue chain is Protein translocase subunit SecD (616 aa).

Transmembrane regions (helical) follow at residues 11–31, 453–473, 475–495, 497–517, 547–569, and 585–605; these read LMVI…IYGE, QGIN…LFYY, MFGV…VGLM, ILPG…TLGM, YNGA…IILY, and LGVA…VNAL.

This sequence belongs to the SecD/SecF family. SecD subfamily. As to quaternary structure, forms a complex with SecF. Part of the essential Sec protein translocation apparatus which comprises SecA, SecYEG and auxiliary proteins SecDF-YajC and YidC.

Its subcellular location is the cell inner membrane. Its function is as follows. Part of the Sec protein translocase complex. Interacts with the SecYEG preprotein conducting channel. SecDF uses the proton motive force (PMF) to complete protein translocation after the ATP-dependent function of SecA. The chain is Protein translocase subunit SecD from Haemophilus influenzae (strain ATCC 51907 / DSM 11121 / KW20 / Rd).